Reading from the N-terminus, the 483-residue chain is Rhamnulokinase (483 aa).

11-15 (ASSGR) contacts ATP. Residues G79 and 234-236 (HDT) each bind substrate. D235 acts as the Proton acceptor in catalysis. T257 contributes to the ATP binding site. N294 is a binding site for substrate. Q302 contributes to the ATP binding site. The cysteines at positions 352 and 369 are disulfide-linked. G401 provides a ligand contact to ATP.

Belongs to the rhamnulokinase family. Requires Mg(2+) as cofactor.

It catalyses the reaction L-rhamnulose + ATP = L-rhamnulose 1-phosphate + ADP + H(+). The protein operates within carbohydrate degradation; L-rhamnose degradation; glycerone phosphate from L-rhamnose: step 2/3. In terms of biological role, involved in the catabolism of L-rhamnose (6-deoxy-L-mannose). Catalyzes the transfer of the gamma-phosphate group from ATP to the 1-hydroxyl group of L-rhamnulose to yield L-rhamnulose 1-phosphate. The sequence is that of Rhamnulokinase from Listeria monocytogenes serotype 4b (strain CLIP80459).